Reading from the N-terminus, the 235-residue chain is Probable inactive serine protease 37 (235 aa).

Positions 1–19 are cleaved as a signal peptide; the sequence is MKYVFYLGVLAGTFFFADS. The Peptidase S1 domain maps to 20–233; the sequence is SVQKEDPAPY…YVSWIENTAK (214 aa). Intrachain disulfides connect cysteine 40–cysteine 56, cysteine 131–cysteine 198, and cysteine 163–cysteine 177.

The protein belongs to the peptidase S1 family. As to expression, testis-specific. Expressed in spermatids (at protein level).

The protein localises to the cytoplasmic vesicle. It is found in the secretory vesicle. It localises to the acrosome. The protein resides in the secreted. Functionally, plays a role in male fertility. May have a role in sperm migration or binding to zona-intact eggs. Involved in the activation of the proacrosin/acrosin system. This Homo sapiens (Human) protein is Probable inactive serine protease 37.